The following is a 360-amino-acid chain: Tryptophan--tRNA ligase, mitochondrial (360 aa).

A mitochondrion-targeting transit peptide spans 1–18 (MALFSVRKARECWRFIRA). ATP-binding positions include Gln-42 and 48–51 (HLGN). Asp-167 serves as a coordination point for L-tryptophan. ATP-binding positions include 179 to 181 (GED), Val-217, and 226 to 230 (KMSKS).

It belongs to the class-I aminoacyl-tRNA synthetase family.

It is found in the mitochondrion matrix. It localises to the mitochondrion. The catalysed reaction is tRNA(Trp) + L-tryptophan + ATP = L-tryptophyl-tRNA(Trp) + AMP + diphosphate + H(+). Functionally, catalyzes the attachment of tryptophan to tRNA(Trp) in a two-step reaction: tryptophan is first activated by ATP to form Trp-AMP and then transferred to the acceptor end of tRNA(Trp). The protein is Tryptophan--tRNA ligase, mitochondrial (Wars2) of Mus musculus (Mouse).